A 635-amino-acid polypeptide reads, in one-letter code: MIRKCLVLFLSFALLLSVFPMLNVDAANRPLAKIPGNSNPLMDHKLGADPYSLVYDGRVYIFMSSDTYVYNKDGSIKENDFSALDRIQVISSTDMVNWTDHGTIPVAGANNKNSGRGIAKWASNSWAPAVAHKKINGRDKFFLYFANGGAGIGVLTADTPIGPWTDPLGKALVTHSTPGMAGVTWLFDPAVLVDDDGTGYLYSGGGIPNESDPASIANPKTARVIKLGADMTSVIGSATTIDAPYLFEDSGIHKYNGKYYYSYCINFAGTHPQQYPAGEIGYMVSDNPMGPFTYKGHFLKNPYTFFGVGGNNHHAVFNFKNEWYVVYHAQTVSKAQIGAGKGYRSPHINKLVHKEDGSISEVQGNMTGIAQLSNMNPYTRVEAETIAWQAGVTTEPTQASGGPISNLNVTNIHNGDWIAVGKADFGSAGAKTFKANVATNVGGNIEVRLDSETGPLVGSLKVPSTGGMQTWREVETTINNATGVHNIYLVFTGSGSGNLLNLDAWQFTPNTGGNTITKVEAENMKIGGTYAGKISAPFDGVALYANADYVSYSQYFANSTHNISVRGASSNAGTAKVDLVIGGVTVGSFNFTGKTPTVQTLSNITHATGDQEIKLALTSDDGTWDAYVDFIEFSL.

The first 26 residues, 1 to 26 (MIRKCLVLFLSFALLLSVFPMLNVDA), serve as a signal peptide directing secretion. Aspartate 49 functions as the Proton acceptor in the catalytic mechanism. Glutamate 248 acts as the Proton donor in catalysis. Asparagine 311 lines the substrate pocket. CBM6 domains follow at residues 379–508 (TRVE…WQFT) and 517–634 (TKVE…IEFS). Ca(2+)-binding residues include glutamate 382, glutamate 384, asparagine 406, leucine 407, aspartate 503, glutamate 520, glutamate 522, aspartate 539, tyrosine 544, aspartate 620, tryptophan 624, aspartate 625, and aspartate 629.

It belongs to the glycosyl hydrolase 43 family.

It localises to the secreted. The catalysed reaction is Hydrolysis of terminal non-reducing alpha-L-arabinofuranoside residues in alpha-L-arabinosides.. It participates in glycan degradation; xylan degradation. Activated by calcium and magnesium. Inhibited by copper. Its function is as follows. Cleaves arabinose units from O-2- or O-3-monosubstituted xylose residues, thereby assisting in arabinoxylan (AX) and short-chain arabinoxylo-oligosaccharide (AXOS) degradation. Preferres wheat flour xylan over oat spelt xylan as substrate. Does not display endoxylanase activity. This chain is Arabinoxylan arabinofuranohydrolase (xynD), found in Paenibacillus polymyxa (Bacillus polymyxa).